A 128-amino-acid polypeptide reads, in one-letter code: MSTLVSLPTVAPAPDYQSIDRPLNFSVAAAAKVRELIQEEGNADLALRVYIQGGGCSGFQYGFEFDENRAEDDLAVATDGVTLLVDPLSLQYLMGAEVDYTESLTGAQFVIRNPNAKTTCGCGSSFSV.

The iron-sulfur cluster site is built by C56, C120, and C122.

Belongs to the HesB/IscA family. Homodimer. It depends on iron-sulfur cluster as a cofactor.

Its function is as follows. Required for insertion of 4Fe-4S clusters for at least IspG. The chain is Iron-sulfur cluster insertion protein ErpA from Xanthomonas euvesicatoria pv. vesicatoria (strain 85-10) (Xanthomonas campestris pv. vesicatoria).